The sequence spans 374 residues: MRHLRNIFNLGIKELRSLLGDKAMLTLIVFSFTVSVYSSATVTPGSLNLAPIAIADMDQSQLSNRIVNSFYRPWFLPPEMITADEMDAGLDAGRYTFAINIPPNFQRDVLAGRQPDIQVNVDATRMSQAFTGNGYIQNIINGEVNSFVARYRDNSEPLVSLETRMRFNPNLDPAWFGGVMAIINNITMLAIVLTGSALIREREHGTVEHLLVMPITPFEIMMAKIWSMGLVVLVVSGLSLVLMVKGVLGVPIEGSIPLFMLGVALSLFATTSIGIFMGTIARSMPQLGLLVILVLLPLQMLSGGSTPRESMPQMVQDIMLTMPTTHFVSLAQAILYRGAGFEIVWPQFLTLMAIGGAFFTIALLRFRKTIGTMA.

The Cytoplasmic segment spans residues 1–22 (MRHLRNIFNLGIKELRSLLGDK). Residues 23–43 (AMLTLIVFSFTVSVYSSATVT) form a helical membrane-spanning segment. Topologically, residues 44-172 (PGSLNLAPIA…TRMRFNPNLD (129 aa)) are periplasmic. An ABC transmembrane type-2 domain is found at 133–369 (NGYIQNIING…TIALLRFRKT (237 aa)). A helical membrane pass occupies residues 173-193 (PAWFGGVMAIINNITMLAIVL). Residues 194–229 (TGSALIREREHGTVEHLLVMPITPFEIMMAKIWSMG) are Cytoplasmic-facing. Residues 230 to 250 (LVVLVVSGLSLVLMVKGVLGV) traverse the membrane as a helical segment. Over 251 to 255 (PIEGS) the chain is Periplasmic. The helical transmembrane segment at 256-276 (IPLFMLGVALSLFATTSIGIF) threads the bilayer. The Cytoplasmic segment spans residues 277-283 (MGTIARS). The helical transmembrane segment at 284–304 (MPQLGLLVILVLLPLQMLSGG) threads the bilayer. Over 305–342 (STPRESMPQMVQDIMLTMPTTHFVSLAQAILYRGAGFE) the chain is Periplasmic. A helical membrane pass occupies residues 343–363 (IVWPQFLTLMAIGGAFFTIAL). The Cytoplasmic segment spans residues 364–374 (LRFRKTIGTMA).

It belongs to the ABC-2 integral membrane protein family.

The protein resides in the cell inner membrane. In Escherichia coli (strain K12), this protein is Inner membrane transport permease YhhJ (yhhJ).